Here is a 350-residue protein sequence, read N- to C-terminus: Protein-glutamate methylesterase/protein-glutamine glutaminase (350 aa).

Residues 5 to 122 (RVLSVDDSAL…REGMLAYSEM (118 aa)) form the Response regulatory domain. Position 56 is a 4-aspartylphosphate (Asp-56). The region spanning 152–338 (LLSSEKLLVI…DLSQVVSQQM (187 aa)) is the CheB-type methylesterase domain. Catalysis depends on residues Ser-164, His-190, and Asp-286.

The protein belongs to the CheB family. Phosphorylated by CheA. Phosphorylation of the N-terminal regulatory domain activates the methylesterase activity.

It localises to the cytoplasm. The enzyme catalyses [protein]-L-glutamate 5-O-methyl ester + H2O = L-glutamyl-[protein] + methanol + H(+). The catalysed reaction is L-glutaminyl-[protein] + H2O = L-glutamyl-[protein] + NH4(+). In terms of biological role, involved in chemotaxis. Part of a chemotaxis signal transduction system that modulates chemotaxis in response to various stimuli. Catalyzes the demethylation of specific methylglutamate residues introduced into the chemoreceptors (methyl-accepting chemotaxis proteins or MCP) by CheR. Also mediates the irreversible deamidation of specific glutamine residues to glutamic acid. The protein is Protein-glutamate methylesterase/protein-glutamine glutaminase of Enterobacter cloacae.